The primary structure comprises 281 residues: Sulfur carrier protein FdhD (281 aa).

Cys-117 acts as the Cysteine persulfide intermediate in catalysis.

It belongs to the FdhD family.

The protein resides in the cytoplasm. Its function is as follows. Required for formate dehydrogenase (FDH) activity. Acts as a sulfur carrier protein that transfers sulfur from IscS to the molybdenum cofactor prior to its insertion into FDH. This chain is Sulfur carrier protein FdhD, found in Xanthomonas axonopodis pv. citri (strain 306).